A 216-amino-acid polypeptide reads, in one-letter code: Thiopurine S-methyltransferase (216 aa).

The S-adenosyl-L-methionine site is built by W10, L45, E66, and R123.

Belongs to the class I-like SAM-binding methyltransferase superfamily. TPMT family.

It is found in the cytoplasm. The enzyme catalyses S-adenosyl-L-methionine + a thiopurine = S-adenosyl-L-homocysteine + a thiopurine S-methylether.. The polypeptide is Thiopurine S-methyltransferase (Pseudomonas putida (strain ATCC 700007 / DSM 6899 / JCM 31910 / BCRC 17059 / LMG 24140 / F1)).